A 118-amino-acid chain; its full sequence is Large ribosomal subunit protein bL17 (118 aa).

The protein belongs to the bacterial ribosomal protein bL17 family. As to quaternary structure, part of the 50S ribosomal subunit. Contacts protein L32.

The polypeptide is Large ribosomal subunit protein bL17 (Onion yellows phytoplasma (strain OY-M)).